An 865-amino-acid chain; its full sequence is MESASASEENEGGAAIEECVSRIPVPRPPSIEEFTIVKPISRGAFGKVYLGQKGGKLYAVKVVKKADMINKNMTHQVQAERDALALSKSPFVVHLYYSLQSASNIYLIMEYLIGGDVKSLLHIYGYFDEEMAIKYISEVALALDYLHRHGIIHRDLKPDNMLISNEGHIKLTDFGLSKVTLNRDINMMDILTTPSMSKPKQDYSRTPGQVLSLISSLGFFTPVGEKDQDSANMFSAPKSAAQLSRGFICPMSVDQKEPTSYSSKLLKSCFETLSSNPEIPVKCLTSNLLQCRKRLGTSSTSSQSHTFVSSVESECHSNPKWERDCQSTESSGCAMSWNAVEMLYAKSTSAIKTKTELELALSPIHDSSAIPAAGSNQVTLPRKCFREISWEARDPDNENMTIDKGQSGFCQSSQRSVNSSATSEEHLGKRNYKRNFHLVDSSPCQEIMQSKKNCTEYEANKERQGCRANQSTGLTTEVQNLKLSGCESQQLDYANKENIVTYLTDRQTPEKLHIPTIAKNLMSELDEDCELSSKKDCLSSNSVCSDEDRALKTTCVDSDSSFPGVSMMESSLEIQALEPDKSIRDYSFEEPNTEDLFVLPKCQENSLPQDDCHACIQDSSQVSAHPSKAPKALTSKINVVAFRSFNSHINASTNSEPSKISITSLDAMDISCDYSGSYPMAVSPTEKGRHYTSHQTPNQVKLGTSYRTPKSVRRGAAPVDDGRILGTPDYLAPELLLGTAHGPAVDWWALGVCLFEFLTGIPPFNDETPQQVFQNILKRDIPWPEGEEKLSDNAQSAMDMLLTIDDSKRAGMRELKQHPLFSEVDWENLQHQTMPFVPQPDDETDTSYFEARNNAQHLTISGFSL.

M1 is subject to N-acetylmethionine. A Protein kinase domain is found at 34 to 821; that stretch reads FTIVKPISRG…MRELKQHPLF (788 aa). Residues 40–48 and K61 contribute to the ATP site; that span reads ISRGAFGKV. The Proton acceptor role is filled by D155. T206 and T221 each carry phosphothreonine. S362 and S442 each carry phosphoserine. T508 is modified (phosphothreonine). Phosphoserine is present on residues S545, S619, S644, and S655. T708 is modified (phosphothreonine). S711 is modified (phosphoserine). T727 bears the Phosphothreonine; by CDK1 mark. The region spanning 822–865 is the AGC-kinase C-terminal domain; sequence SEVDWENLQHQTMPFVPQPDDETDTSYFEARNNAQHLTISGFSL. A phosphoserine mark is found at S861 and S864.

It belongs to the protein kinase superfamily. AGC Ser/Thr protein kinase family. Phosphorylation at Thr-727 by CDK1 during M phase activates its kinase activity. Maximum phosphorylation occurs in prometaphase.

It localises to the cytoplasm. The protein localises to the cytoskeleton. The protein resides in the microtubule organizing center. Its subcellular location is the centrosome. It is found in the nucleus. The enzyme catalyses L-seryl-[protein] + ATP = O-phospho-L-seryl-[protein] + ADP + H(+). The catalysed reaction is L-threonyl-[protein] + ATP = O-phospho-L-threonyl-[protein] + ADP + H(+). Its function is as follows. Serine/threonine kinase that plays a key role in M phase by acting as a regulator of mitosis entry and maintenance. Acts by promoting the inactivation of protein phosphatase 2A (PP2A) during M phase: does not directly inhibit PP2A but acts by mediating phosphorylation and subsequent activation of ARPP19 and ENSA at 'Ser-62' and 'Ser-67', respectively. ARPP19 and ENSA are phosphatase inhibitors that specifically inhibit the PPP2R2D (PR55-delta) subunit of PP2A. Inactivation of PP2A during M phase is essential to keep cyclin-B1-CDK1 activity high. Following DNA damage, it is also involved in checkpoint recovery by being inhibited. This Mus musculus (Mouse) protein is Serine/threonine-protein kinase greatwall (Mastl).